We begin with the raw amino-acid sequence, 235 residues long: Type III pantothenate kinase (235 aa).

Residue 6 to 13 (DVGNNYIK) coordinates ATP. Substrate is bound by residues Tyr-81 and 88–91 (GTDR). Asp-90 (proton acceptor) is an active-site residue. Asp-111 lines the K(+) pocket. Thr-114 lines the ATP pocket. Position 166 (Thr-166) interacts with substrate.

Belongs to the type III pantothenate kinase family. As to quaternary structure, homodimer. NH4(+) serves as cofactor. K(+) is required as a cofactor.

Its subcellular location is the cytoplasm. It catalyses the reaction (R)-pantothenate + ATP = (R)-4'-phosphopantothenate + ADP + H(+). It participates in cofactor biosynthesis; coenzyme A biosynthesis; CoA from (R)-pantothenate: step 1/5. Functionally, catalyzes the phosphorylation of pantothenate (Pan), the first step in CoA biosynthesis. This Cytophaga hutchinsonii (strain ATCC 33406 / DSM 1761 / CIP 103989 / NBRC 15051 / NCIMB 9469 / D465) protein is Type III pantothenate kinase.